The following is a 232-amino-acid chain: ATP-dependent Clp protease proteolytic subunit 2 (232 aa).

Residue Ser124 is the Nucleophile of the active site. The active site involves His149.

The protein belongs to the peptidase S14 family. In terms of assembly, fourteen ClpP subunits assemble into 2 heptameric rings which stack back to back to give a disk-like structure with a central cavity, resembling the structure of eukaryotic proteasomes.

Its subcellular location is the cytoplasm. The enzyme catalyses Hydrolysis of proteins to small peptides in the presence of ATP and magnesium. alpha-casein is the usual test substrate. In the absence of ATP, only oligopeptides shorter than five residues are hydrolyzed (such as succinyl-Leu-Tyr-|-NHMec, and Leu-Tyr-Leu-|-Tyr-Trp, in which cleavage of the -Tyr-|-Leu- and -Tyr-|-Trp bonds also occurs).. In terms of biological role, cleaves peptides in various proteins in a process that requires ATP hydrolysis. Has a chymotrypsin-like activity. Plays a major role in the degradation of misfolded proteins. In Nostoc sp. (strain PCC 7120 / SAG 25.82 / UTEX 2576), this protein is ATP-dependent Clp protease proteolytic subunit 2.